The following is a 239-amino-acid chain: Methylthioribulose-1-phosphate dehydratase (239 aa).

A substrate-binding site is contributed by Cys-94. Residues His-112 and His-114 each coordinate Zn(2+). Glu-136 serves as the catalytic Proton donor/acceptor. Position 192 (His-192) interacts with Zn(2+).

This sequence belongs to the aldolase class II family. MtnB subfamily. Zn(2+) serves as cofactor.

Its subcellular location is the cytoplasm. The enzyme catalyses 5-(methylsulfanyl)-D-ribulose 1-phosphate = 5-methylsulfanyl-2,3-dioxopentyl phosphate + H2O. The protein operates within amino-acid biosynthesis; L-methionine biosynthesis via salvage pathway; L-methionine from S-methyl-5-thio-alpha-D-ribose 1-phosphate: step 2/6. Catalyzes the dehydration of methylthioribulose-1-phosphate (MTRu-1-P) into 2,3-diketo-5-methylthiopentyl-1-phosphate (DK-MTP-1-P). Functions in the methionine salvage pathway. May play a role in apoptosis. This is Methylthioribulose-1-phosphate dehydratase from Xenopus tropicalis (Western clawed frog).